A 289-amino-acid chain; its full sequence is 4-diphosphocytidyl-2-C-methyl-D-erythritol kinase (289 aa).

The active site involves Lys10. 94–104 (PVAAGLAGGSS) lines the ATP pocket. Residue Asp136 is part of the active site.

It belongs to the GHMP kinase family. IspE subfamily.

The enzyme catalyses 4-CDP-2-C-methyl-D-erythritol + ATP = 4-CDP-2-C-methyl-D-erythritol 2-phosphate + ADP + H(+). It participates in isoprenoid biosynthesis; isopentenyl diphosphate biosynthesis via DXP pathway; isopentenyl diphosphate from 1-deoxy-D-xylulose 5-phosphate: step 3/6. Its function is as follows. Catalyzes the phosphorylation of the position 2 hydroxy group of 4-diphosphocytidyl-2C-methyl-D-erythritol. This is 4-diphosphocytidyl-2-C-methyl-D-erythritol kinase from Bacillus anthracis (strain CDC 684 / NRRL 3495).